A 276-amino-acid chain; its full sequence is Large ribosomal subunit protein uL2 (276 aa).

2 disordered regions span residues 14 to 58 (RNAS…GGGH) and 219 to 276 (PITR…KNRK). The segment covering 16–27 (ASVSDFSELTRS) has biased composition (polar residues). The segment covering 255–276 (RRPKKASNKMIVRRRPSGKNRK) has biased composition (basic residues).

It belongs to the universal ribosomal protein uL2 family. As to quaternary structure, part of the 50S ribosomal subunit. Forms a bridge to the 30S subunit in the 70S ribosome.

One of the primary rRNA binding proteins. Required for association of the 30S and 50S subunits to form the 70S ribosome, for tRNA binding and peptide bond formation. It has been suggested to have peptidyltransferase activity; this is somewhat controversial. Makes several contacts with the 16S rRNA in the 70S ribosome. In Bifidobacterium longum (strain DJO10A), this protein is Large ribosomal subunit protein uL2.